The primary structure comprises 263 residues: Acetylglutamate kinase (263 aa).

Residues 48–49 (GG), Arg70, and Asn162 each bind substrate.

This sequence belongs to the acetylglutamate kinase family. ArgB subfamily.

The protein localises to the cytoplasm. The enzyme catalyses N-acetyl-L-glutamate + ATP = N-acetyl-L-glutamyl 5-phosphate + ADP. It functions in the pathway amino-acid biosynthesis; L-arginine biosynthesis; N(2)-acetyl-L-ornithine from L-glutamate: step 2/4. Its function is as follows. Catalyzes the ATP-dependent phosphorylation of N-acetyl-L-glutamate. The chain is Acetylglutamate kinase from Vibrio campbellii (strain ATCC BAA-1116).